A 213-amino-acid polypeptide reads, in one-letter code: Protein GrpE (213 aa).

The tract at residues 1–61 is disordered; sequence MEQGEKQVME…AEKAPTAEEL (61 aa). The segment covering 13-35 has biased composition (acidic residues); sequence TYDEPEREQPIEEEAAPQPEEES.

The protein belongs to the GrpE family. In terms of assembly, homodimer.

Its subcellular location is the cytoplasm. Its function is as follows. Participates actively in the response to hyperosmotic and heat shock by preventing the aggregation of stress-denatured proteins, in association with DnaK and GrpE. It is the nucleotide exchange factor for DnaK and may function as a thermosensor. Unfolded proteins bind initially to DnaJ; upon interaction with the DnaJ-bound protein, DnaK hydrolyzes its bound ATP, resulting in the formation of a stable complex. GrpE releases ADP from DnaK; ATP binding to DnaK triggers the release of the substrate protein, thus completing the reaction cycle. Several rounds of ATP-dependent interactions between DnaJ, DnaK and GrpE are required for fully efficient folding. The protein is Protein GrpE of Geobacillus kaustophilus (strain HTA426).